A 649-amino-acid polypeptide reads, in one-letter code: Endoplasmic reticulum chaperone BiP (649 aa).

Positions 1–20 (MGLSTYVGTFLLCILTLSHC) are cleaved as a signal peptide. ATP contacts are provided by residues 36–39 (GTTY), K96, 226–228 (GGT), 292–299 (EKAKRTLS), and 363–366 (GSTR). Residues 125–279 (KPYMKVQVGS…KKKEGKDITK (155 aa)) are nucleotide-binding (NBD). Residues 399 to 499 (VQAGVISGVE…PRGLPQIEVT (101 aa)) form a substrate-binding (SBD) region. A Prevents secretion from ER motif is present at residues 646–649 (KEEL).

Belongs to the heat shock protein 70 family.

It is found in the endoplasmic reticulum lumen. It catalyses the reaction ATP + H2O = ADP + phosphate + H(+). With respect to regulation, the chaperone activity is regulated by ATP-induced allosteric coupling of the nucleotide-binding (NBD) and substrate-binding (SBD) domains. In the ADP-bound and nucleotide-free (apo) states, the two domains have little interaction. In contrast, in the ATP-bound state the two domains are tightly coupled, which results in drastically accelerated kinetics in both binding and release of polypeptide substrates. J domain-containing co-chaperones stimulate the ATPase activity and are required for efficient substrate recognition. Functionally, endoplasmic reticulum chaperone that plays a key role in protein folding and quality control in the endoplasmic reticulum lumen. Involved in the correct folding of proteins and degradation of misfolded proteins. Acts as a key repressor of the unfolded protein response (UPR). This Echinococcus multilocularis (Fox tapeworm) protein is Endoplasmic reticulum chaperone BiP.